Consider the following 147-residue polypeptide: Epididymal secretory protein E3-beta (147 aa).

Residues 1–25 (MASSLKIWGTLLALLCILCTLLVQS) form the signal peptide.

As to expression, epididymis.

The protein localises to the secreted. Functionally, possible function in sperm maturation. The chain is Epididymal secretory protein E3-beta (EDDM3B) from Homo sapiens (Human).